The following is a 643-amino-acid chain: Conglutin alpha 2 (643 aa).

Positions 1–22 (MAKPCLFSFSLCLLLLSSLCLA) are cleaved as a signal peptide. Intrachain disulfides connect cysteine 31–cysteine 64 and cysteine 107–cysteine 464. The Cupin type-1 1 domain occupies 36–261 (LNALEPDNRV…AFNVDEEIIN (226 aa)). Disordered stretches follow at residues 110-142 (TYEE…DSHQ), 190-243 (PRRF…VLSG), and 285-458 (PKSQ…SRNG). Over residues 207–218 (QEQQGQQREQQQ) the composition is skewed to low complexity. 2 stretches are compositionally biased toward basic and acidic residues: residues 228 to 237 (HQQEQEEEGK) and 298 to 313 (PRQR…RREE). Over residues 314 to 323 (EKEEEEEEDE) the composition is skewed to acidic residues. Basic and acidic residues-rich tracts occupy residues 324–333 (PRSRERYERQ) and 357–369 (QEGR…WERT). The segment covering 422–433 (RGRHGGRGRRSG) has biased composition (basic residues). In terms of domain architecture, Cupin type-1 2 spans 470–616 (ENIAKPSRAD…AFGLRLNQVS (147 aa)). Residues 623-632 (NQGPLVSPQS) are compositionally biased toward polar residues. Positions 623-643 (NQGPLVSPQSESEDHTLPKVA) are disordered. Over residues 634–643 (SEDHTLPKVA) the composition is skewed to basic and acidic residues.

The protein belongs to the 11S seed storage protein (globulins) family. Hexamer; each subunit is composed of an acidic and a basic chain derived from a single precursor and linked by a disulfide bond. Component of globulins complexes which accumulate in seeds.

Functionally, sulfur-rich seed storage protein. This protein found in the seeds of many leguminous and non-leguminous plants is the source of sulfur-containing amino acids in seed meals. This chain is Conglutin alpha 2, found in Lupinus angustifolius (Narrow-leaved blue lupine).